Consider the following 367-residue polypeptide: MSFDSVPRHALSMRFDLEPPSHASAAHRVAVLLVNLGTPDAPTPRAVRRYLAQFLSDPRVVEIPQLVWQVILRTLILPLRGRASAKKYAAVWLPEGSPLRVYTERQVESVKPLFAANGYRVIVDYAMRYGTPSIADVLAQLKRAGAERVLLLPMYPQYSSSTTATAFDAAFAALGRMRNQPEVRTVRHYADHPAYIHALAEQVRQYWAAHGRPAFDAGDKLVLSFHGVPKRTLDLGDPYHDQCQQTAALLMSALGLTTFECRVTFQSRFGKAEWLQPYTAPTLKELGAAGVRRADVFCPGFTADCLETIEEIGIEVRDEFVHGGGKEFHRIPCLNASPAWIAALGEIAAENLQGWPVRVAMAPEAVS.

2 residues coordinate Fe cation: H226 and E307.

The protein belongs to the ferrochelatase family.

The protein localises to the cytoplasm. It carries out the reaction heme b + 2 H(+) = protoporphyrin IX + Fe(2+). Its pathway is porphyrin-containing compound metabolism; protoheme biosynthesis; protoheme from protoporphyrin-IX: step 1/1. Its function is as follows. Catalyzes the ferrous insertion into protoporphyrin IX. The polypeptide is Ferrochelatase (Burkholderia pseudomallei (strain 1106a)).